We begin with the raw amino-acid sequence, 204 residues long: N-alpha-acetyltransferase 40 (204 aa).

Positions Glu39–Lys202 constitute an N-acetyltransferase domain. Residues Tyr64, Thr107–Glu109, and Tyr118 each bind substrate. Acetyl-CoA contacts are provided by residues Ile120 to Leu122 and Gly128 to Lys133. Residue Thr154 participates in substrate binding. Position 159 (Asn159) interacts with acetyl-CoA. Ser176 serves as a coordination point for substrate.

This sequence belongs to the acetyltransferase family. NAA40 subfamily.

It is found in the cytoplasm. Its subcellular location is the nucleus. It catalyses the reaction N-terminal L-seryl-[histone H4] + acetyl-CoA = N-terminal N(alpha)-acetyl-L-seryl-[histone H4] + CoA + H(+). The enzyme catalyses N-terminal L-seryl-[histone H2A] + acetyl-CoA = N-terminal N(alpha)-acetyl-L-seryl-[histone H2A] + CoA + H(+). In terms of biological role, N-alpha-acetyltransferase that specifically mediates the acetylation of the N-terminal residues of histones H4 and H2A. This chain is N-alpha-acetyltransferase 40, found in Schizosaccharomyces pombe (strain 972 / ATCC 24843) (Fission yeast).